The following is a 399-amino-acid chain: MTFKTLDDLTDIAGKRVLVRVDLNVPVKDGQVTDTTRIERVAPTIRELSEKGAKIILLAHFGRPKGEPVADMSLKAIAPAVEEILDQRVHFAADCIGDKAANAIAEMNDGDVLLLENTRFHKGEEKNDPAFVTALAANGDLYVNDAFSAAHRAHASTEGLAQHLPAYAGRTMQAELEALEKGLGNPKRPVVAIVGGAKVSTKIDLLQNLVKKVDALVIGGGMANTFLAAQGVDVGKSLCEHDLAETAKSIIAAAAAAGCAIVLPEDGVVAREFKAGADNAVVDIKAIPADAMVLDVGPKSVAAINDWISRAETLVWNGPLGAFEIAPFDKATVAAAKHAAARTRQGSLVSVAGGGDTVAALNHAEVADDFTYVSTAGGAFLEWMEGKPLPGVDILHKQK.

Substrate is bound by residues 22–24 (DLN), Arg-37, 60–63 (HFGR), Arg-119, and Arg-152. ATP is bound by residues Lys-202, Glu-324, and 354–357 (GGDT).

The protein belongs to the phosphoglycerate kinase family. As to quaternary structure, monomer.

Its subcellular location is the cytoplasm. The enzyme catalyses (2R)-3-phosphoglycerate + ATP = (2R)-3-phospho-glyceroyl phosphate + ADP. Its pathway is carbohydrate degradation; glycolysis; pyruvate from D-glyceraldehyde 3-phosphate: step 2/5. This Sinorhizobium fredii (strain NBRC 101917 / NGR234) protein is Phosphoglycerate kinase.